The primary structure comprises 607 residues: CUB and zona pellucida-like domain-containing protein 1 (607 aa).

An N-terminal signal peptide occupies residues 1 to 19; sequence MEVTGRLFIWAILAVSCGA. Cys17 and Cys58 form a disulfide bridge. CUB domains lie at 20 to 146 and 154 to 265; these read QLNS…YFFS and CGGD…YTSI. The Lumenal portion of the chain corresponds to 20–568; it reads QLNSTEAEGK…AEISNQPLSR (549 aa). N-linked (GlcNAc...) asparagine glycans are attached at residues Asn22, Asn57, and Asn67. Disulfide bonds link Cys85–Cys107, Cys154–Cys180, and Cys207–Cys229. In terms of domain architecture, ZP spans 276-519; it reads SCVSDKMRVI…SRCNQGCVPR (244 aa). An N-linked (GlcNAc...) asparagine glycan is attached at Asn419. Cys442 and Cys498 form a disulfide bridge. A helical membrane pass occupies residues 569–589; that stretch reads LYLFSFMVLALNVVIVAITTV. Over 590 to 607 the chain is Cytoplasmic; sequence KHFLNRWMDHRYQKLQVY.

As to expression, highly expressed in pancreatic acinar cells. Also expressed in epithelium of the uterus during late pregnancy but not detected in non-pregnant uterus or in a variety of other adult and fetal tissues.

It is found in the zymogen granule membrane. In terms of biological role, localized to zymogen granules, where it functions in trypsinogen activation. May indirectly regulate cell motility, cell-cell and cell/extracellular matrix interactions. This is CUB and zona pellucida-like domain-containing protein 1 from Mus musculus (Mouse).